Reading from the N-terminus, the 1631-residue chain is ALK tyrosine kinase receptor (1631 aa).

Positions 1–18 (MGSVGLLGLLLLRLSVTA) are cleaved as a signal peptide. The Extracellular portion of the chain corresponds to 19 to 1053 (SGSGAGTGSG…PHLPLSLVLS (1035 aa)). The interval 20–53 (GSGAGTGSGTGSGTGTGTGQLVGSPATGPALQPR) is disordered. The segment covering 21 to 39 (SGAGTGSGTGSGTGTGTGQ) has biased composition (gly residues). A heparin-binding region region spans residues 60 to 82 (RLQRKSLAVDFVVPSLFRVYARD). Residues asparagine 185, asparagine 260, asparagine 301, asparagine 340, asparagine 427, asparagine 440, asparagine 461, asparagine 579, asparagine 587, and asparagine 643 are each glycosylated (N-linked (GlcNAc...) asparagine). One can recognise an MAM 1 domain in the interval 280 to 443 (LECSFDFPCE…DFFALKNCSE (164 aa)). The MAM 2 domain maps to 494–652 (FYCNFENGFC…NISISLDCYL (159 aa)). A disulfide bond links cysteine 703 and cysteine 716. A glycan (N-linked (GlcNAc...) asparagine) is linked at asparagine 724. Residues cysteine 798 and cysteine 809 are joined by a disulfide bond. Residues asparagine 823, asparagine 878, asparagine 879, and asparagine 901 are each glycosylated (N-linked (GlcNAc...) asparagine). A disulfide bridge links cysteine 921 with cysteine 943. A glycan (N-linked (GlcNAc...) asparagine) is linked at asparagine 1001. 3 disulfides stabilise this stretch: cysteine 1002/cysteine 1010, cysteine 1005/cysteine 1021, and cysteine 1023/cysteine 1036. Residues 1002–1040 (CSHCEGDECHMDPESHKVICFCDHGTVLAEDGVSCIVSP) are EGF-like. The chain crosses the membrane as a helical span at residues 1054-1074 (VVTSALVAALVLAFSGIMIVY). The Cytoplasmic segment spans residues 1075-1631 (RRKHQELQAM…DALLKTPPGP (557 aa)). The 277-residue stretch at 1131–1407 (ITLIRGLGHG…IEYCTQDPDV (277 aa)) folds into the Protein kinase domain. ATP-binding positions include 1137 to 1145 (LGHGAFGEV) and lysine 1165. Residue aspartate 1264 is the Proton acceptor of the active site. Disordered regions lie at residues 1423-1493 (EEKV…GHVN), 1526-1554 (WFTE…REGS), and 1609-1631 (FEGT…PPGP).

In terms of assembly, homodimer; homodimerizes following heparin- and ligand-binding. Interacts with CBL, IRS1, PIK3R1 and PLCG1. Interacts with FRS2 and SHC1. Interacts with PTN and MDK. Phosphorylated at tyrosine residues by autocatalysis, which activates kinase activity. In cells not stimulated by a ligand, receptor protein tyrosine phosphatase beta and zeta complex (PTPRB/PTPRZ1) dephosphorylates ALK at the sites in ALK that are undergoing autophosphorylation through autoactivation.

It localises to the cell membrane. It carries out the reaction L-tyrosyl-[protein] + ATP = O-phospho-L-tyrosyl-[protein] + ADP + H(+). Its activity is regulated as follows. Activated upon ALKAL2 ligand-binding. ALKAL2-driven activation is coupled with heparin-binding. Following ligand-binding, homodimerizes and autophosphorylates, activating its kinase activity. Inactivated through dephosphorylation by receptor protein tyrosine phosphatase beta and zeta complex (PTPRB/PTPRZ1) when there is no stimulation by a ligand. Its function is as follows. Neuronal receptor tyrosine kinase that is essentially and transiently expressed in specific regions of the central and peripheral nervous systems and plays an important role in the genesis and differentiation of the nervous system. Also acts as a key thinness protein involved in the resistance to weight gain: in hypothalamic neurons, controls energy expenditure acting as a negative regulator of white adipose tissue lipolysis and sympathetic tone to fine-tune energy homeostasis. Following activation by ALKAL2 ligand at the cell surface, transduces an extracellular signal into an intracellular response. In contrast, ALKAL1 is not a potent physiological ligand for ALK. Ligand-binding to the extracellular domain induces tyrosine kinase activation, leading to activation of the mitogen-activated protein kinase (MAPK) pathway. Phosphorylates almost exclusively at the first tyrosine of the Y-x-x-x-Y-Y motif. Induces tyrosine phosphorylation of CBL, FRS2, IRS1 and SHC1, as well as of the MAP kinases MAPK1/ERK2 and MAPK3/ERK1. ALK activation may also be regulated by pleiotrophin (PTN) and midkine (MDK). PTN-binding induces MAPK pathway activation, which is important for the anti-apoptotic signaling of PTN and regulation of cell proliferation. MDK-binding induces phosphorylation of the ALK target insulin receptor substrate (IRS1), activates mitogen-activated protein kinases (MAPKs) and PI3-kinase, resulting also in cell proliferation induction. Drives NF-kappa-B activation, probably through IRS1 and the activation of the AKT serine/threonine kinase. Recruitment of IRS1 to activated ALK and the activation of NF-kappa-B are essential for the autocrine growth and survival signaling of MDK. This is ALK tyrosine kinase receptor from Canis lupus familiaris (Dog).